Consider the following 266-residue polypeptide: Glucosamine-6-phosphate deaminase (266 aa).

D72 functions as the Proton acceptor; for enolization step in the catalytic mechanism. D141 (for ring-opening step) is an active-site residue. H143 acts as the Proton acceptor; for ring-opening step in catalysis. The active-site For ring-opening step is the E148.

This sequence belongs to the glucosamine/galactosamine-6-phosphate isomerase family. NagB subfamily. As to quaternary structure, homohexamer.

It carries out the reaction alpha-D-glucosamine 6-phosphate + H2O = beta-D-fructose 6-phosphate + NH4(+). Its pathway is amino-sugar metabolism; N-acetylneuraminate degradation; D-fructose 6-phosphate from N-acetylneuraminate: step 5/5. Its activity is regulated as follows. Allosterically activated by N-acetylglucosamine 6-phosphate (GlcNAc6P). Its function is as follows. Catalyzes the reversible isomerization-deamination of glucosamine 6-phosphate (GlcN6P) to form fructose 6-phosphate (Fru6P) and ammonium ion. In Pectobacterium carotovorum subsp. carotovorum (strain PC1), this protein is Glucosamine-6-phosphate deaminase.